The primary structure comprises 293 residues: GPN-loop GTPase 3 (293 aa).

13 to 18 is a binding site for GTP; that stretch reads GAGKST. The Gly-Pro-Asn (GPN)-loop; involved in dimer interface signature appears at 70 to 72; the sequence is GPN. 176-179 serves as a coordination point for GTP; that stretch reads SKMD. Over residues 272 to 281 the composition is skewed to basic and acidic residues; it reads HEAQEPREPN. Residues 272-293 form a disordered region; that stretch reads HEAQEPREPNDEQDVDYEDADI. Residues 282-293 are compositionally biased toward acidic residues; that stretch reads DEQDVDYEDADI.

It belongs to the GPN-loop GTPase family. As to quaternary structure, heterodimers with gpn1 or gpn2. Binds to RNA polymerase II (RNAPII).

In terms of biological role, small GTPase required for proper nuclear import of RNA polymerase II and III (RNAPII and RNAPIII). May act at an RNAP assembly step prior to nuclear import. This is GPN-loop GTPase 3 from Aspergillus fumigatus (strain ATCC MYA-4609 / CBS 101355 / FGSC A1100 / Af293) (Neosartorya fumigata).